The sequence spans 263 residues: UPF0739 protein C1orf74 homolog (263 aa).

This sequence belongs to the UPF0739 family.

The protein is UPF0739 protein C1orf74 homolog of Mus musculus (Mouse).